A 106-amino-acid chain; its full sequence is Transcription initiation factor IIA subunit 2 (106 aa).

It belongs to the TFIIA subunit 2 family. In terms of assembly, TFIIA is a heterodimer of the large unprocessed subunit 1 and a small subunit gamma. It was originally believed to be a heterotrimer of an alpha (p30), a beta (p20) and a gamma (p14) subunit. Forms a complex with Moonshiner/CG12721 and Trf2. As to expression, ubiquitous.

It localises to the nucleus. In terms of biological role, TFIIA is a component of the transcription machinery of RNA polymerase II and plays an important role in transcriptional activation. TFIIA in a complex with TBP mediates transcriptional activity. Part of a rhi-dependent transcription machinery that enables the generation of piRNA precursors from heterochromatin while maintaining the suppression of transposon-encoded promoters and enhancers. Forms a complex with Moonshiner/CG12721 and Trf2 which recruit transcriptional machinery to heterochromatin to initiate the bidirectional transcription of piRNA clusters, by interacting with the RDC (rhi, del and cuff) complex that binds to repressive H3K9me3 marks in the chromatin. This mechanism allows transcription to occur in piRNA clusters despite the lack of proper promoter elements and in the presence of the repressive H3K9me3 mark. The protein is Transcription initiation factor IIA subunit 2 (TfIIA-S) of Drosophila melanogaster (Fruit fly).